Reading from the N-terminus, the 88-residue chain is Small ribosomal subunit protein uS15 (88 aa).

The protein belongs to the universal ribosomal protein uS15 family. Part of the 30S ribosomal subunit. Forms a bridge to the 50S subunit in the 70S ribosome, contacting the 23S rRNA.

Functionally, one of the primary rRNA binding proteins, it binds directly to 16S rRNA where it helps nucleate assembly of the platform of the 30S subunit by binding and bridging several RNA helices of the 16S rRNA. Its function is as follows. Forms an intersubunit bridge (bridge B4) with the 23S rRNA of the 50S subunit in the ribosome. This chain is Small ribosomal subunit protein uS15, found in Geobacter metallireducens (strain ATCC 53774 / DSM 7210 / GS-15).